The following is a 689-amino-acid chain: Elongation factor G (689 aa).

Positions 8–282 (LNTRNIGIMA…AVVDYLPSPL (275 aa)) constitute a tr-type G domain. Residues 17–24 (AHIDAGKT), 81–85 (DTPGH), and 135–138 (NKMD) each bind GTP.

The protein belongs to the TRAFAC class translation factor GTPase superfamily. Classic translation factor GTPase family. EF-G/EF-2 subfamily.

The protein resides in the cytoplasm. In terms of biological role, catalyzes the GTP-dependent ribosomal translocation step during translation elongation. During this step, the ribosome changes from the pre-translocational (PRE) to the post-translocational (POST) state as the newly formed A-site-bound peptidyl-tRNA and P-site-bound deacylated tRNA move to the P and E sites, respectively. Catalyzes the coordinated movement of the two tRNA molecules, the mRNA and conformational changes in the ribosome. This Mycoplasma mycoides subsp. mycoides SC (strain CCUG 32753 / NCTC 10114 / PG1) protein is Elongation factor G.